A 131-amino-acid polypeptide reads, in one-letter code: MVILYTTASCASCRKAKAWLEEHQIDYIEKNIVSNSMTVDELKSILRLTEEGATEIISTRSKTFQDLNINIDELSLNEFYTLIIEHPLMLRRPIMLDEKRLQIGFNEEEIRKFLPRSVRTFLNIELQKLAN.

C10 and C13 form a disulfide bridge.

The protein belongs to the ArsC family. Spx subfamily. Interacts with the C-terminal domain of the alpha subunit of the RNAP.

It localises to the cytoplasm. In terms of biological role, global transcriptional regulator that plays a key role in stress response and exerts either positive or negative regulation of genes. Acts by interacting with the C-terminal domain of the alpha subunit of the RNA polymerase (RNAP). This interaction can enhance binding of RNAP to the promoter region of target genes and stimulate their transcription, or block interaction of RNAP with activator. The protein is Global transcriptional regulator Spx 2 of Bacillus cereus (strain ATCC 14579 / DSM 31 / CCUG 7414 / JCM 2152 / NBRC 15305 / NCIMB 9373 / NCTC 2599 / NRRL B-3711).